Reading from the N-terminus, the 27-residue chain is Zinc metalloproteinase multactivase catalytic subunit (27 aa).

One can recognise a Peptidase M12B domain in the interval 12 to 27 (FIELVIIVDHSXXTYK). Ca(2+) is bound at residue glutamate 14.

This sequence belongs to the venom metalloproteinase (M12B) family. P-III subfamily. P-IIId sub-subfamily. In terms of assembly, heterodimer of a metalloproteinase subunit and a regulatory subunit comprising two homologous disulfide-linked lectins (AC P81798). Zn(2+) is required as a cofactor. Expressed by the venom gland.

The protein localises to the secreted. This carinactivase-like calcium-dependent prothrombin (F2) activator activates prothrombin via recognition of the calcium ion bound conformation of its gamma-carboxyglutamic acid (GLA) domain, and the subsequent conversion of prothrombin to active thrombin is catalyzed by the catalytic subunit. This Echis multisquamatus (Central Asian sand viper) protein is Zinc metalloproteinase multactivase catalytic subunit.